We begin with the raw amino-acid sequence, 124 residues long: Large ribosomal subunit protein bL12 (124 aa).

The span at 102–116 (MSKEDAEAAKTKLEE) shows a compositional bias: basic and acidic residues. A disordered region spans residues 102-124 (MSKEDAEAAKTKLEEAGASVELK).

This sequence belongs to the bacterial ribosomal protein bL12 family. Homodimer. Part of the ribosomal stalk of the 50S ribosomal subunit. Forms a multimeric L10(L12)X complex, where L10 forms an elongated spine to which 2 to 4 L12 dimers bind in a sequential fashion. Binds GTP-bound translation factors.

In terms of biological role, forms part of the ribosomal stalk which helps the ribosome interact with GTP-bound translation factors. Is thus essential for accurate translation. This Chromohalobacter salexigens (strain ATCC BAA-138 / DSM 3043 / CIP 106854 / NCIMB 13768 / 1H11) protein is Large ribosomal subunit protein bL12.